Consider the following 189-residue polypeptide: uncharacterized protein (189 aa).

The protein belongs to the inositol monophosphatase superfamily.

This is an uncharacterized protein from Leptospira biflexa.